The sequence spans 178 residues: ATP-dependent protease subunit HslV (178 aa).

The active site involves T8. 3 residues coordinate Na(+): G163, C166, and T169.

It belongs to the peptidase T1B family. HslV subfamily. A double ring-shaped homohexamer of HslV is capped on each side by a ring-shaped HslU homohexamer. The assembly of the HslU/HslV complex is dependent on binding of ATP.

Its subcellular location is the cytoplasm. The enzyme catalyses ATP-dependent cleavage of peptide bonds with broad specificity.. With respect to regulation, allosterically activated by HslU binding. Its function is as follows. Protease subunit of a proteasome-like degradation complex believed to be a general protein degrading machinery. The polypeptide is ATP-dependent protease subunit HslV (Treponema denticola (strain ATCC 35405 / DSM 14222 / CIP 103919 / JCM 8153 / KCTC 15104)).